We begin with the raw amino-acid sequence, 289 residues long: uncharacterized protein (289 aa).

Positions Pro-80–Asn-96 are enriched in polar residues. Disordered stretches follow at residues Pro-80–Tyr-101 and Pro-136–Glu-157.

This is an uncharacterized protein from Acanthamoeba polyphaga (Amoeba).